The sequence spans 452 residues: Pup--protein ligase (452 aa).

E9 is a binding site for Mg(2+). Residue R53 participates in ATP binding. Y55 contributes to the Mg(2+) binding site. The Proton acceptor role is filled by D57. Position 63 (E63) interacts with Mg(2+). ATP-binding residues include T66 and W419.

This sequence belongs to the Pup ligase/Pup deamidase family. Pup-conjugating enzyme subfamily.

It catalyses the reaction ATP + [prokaryotic ubiquitin-like protein]-L-glutamate + [protein]-L-lysine = ADP + phosphate + N(6)-([prokaryotic ubiquitin-like protein]-gamma-L-glutamyl)-[protein]-L-lysine.. The protein operates within protein degradation; proteasomal Pup-dependent pathway. It participates in protein modification; protein pupylation. Its function is as follows. Catalyzes the covalent attachment of the prokaryotic ubiquitin-like protein modifier Pup to the proteasomal substrate proteins, thereby targeting them for proteasomal degradation. This tagging system is termed pupylation. The ligation reaction involves the side-chain carboxylate of the C-terminal glutamate of Pup and the side-chain amino group of a substrate lysine. The protein is Pup--protein ligase of Saccharomonospora viridis (strain ATCC 15386 / DSM 43017 / JCM 3036 / CCUG 5913 / NBRC 12207 / NCIMB 9602 / P101) (Thermoactinomyces viridis).